Consider the following 309-residue polypeptide: Protease HtpX homolog (309 aa).

Helical transmembrane passes span 7–27 (AILL…IGGA) and 28–48 (SGAM…YWNS). His130 lines the Zn(2+) pocket. Residue Glu131 is part of the active site. His134 contributes to the Zn(2+) binding site. 2 helical membrane-spanning segments follow: residues 145 to 165 (VTAT…FFGG) and 173 to 193 (GLGV…AMLV). Residue Glu202 coordinates Zn(2+).

The protein belongs to the peptidase M48B family. Requires Zn(2+) as cofactor.

The protein resides in the cell inner membrane. The polypeptide is Protease HtpX homolog (Rhodopseudomonas palustris (strain BisA53)).